The primary structure comprises 118 residues: Hisactophilin-1 (118 aa).

A lipid anchor (N-myristoyl glycine) is attached at G2. The segment at S8–H109 is contains several HHXH repeats. Tandem repeats lie at residues F34–K46 and F74–K86. Positions F34 to K86 are 2 X 13 AA approximate repeats.

It belongs to the hisactophilin family. In terms of assembly, homodimer or heterodimer of hatA and hatB, linked by a disulfide bond. In terms of processing, phosphorylated.

It localises to the cytoplasm. Its subcellular location is the cell membrane. Its function is as follows. May act as an intracellular pH sensor that links chemotactic signals to responses in the microfilament system of the cells by nucleating actin polymerization or stabilizing the filaments. This Dictyostelium discoideum (Social amoeba) protein is Hisactophilin-1 (hatA).